A 144-amino-acid polypeptide reads, in one-letter code: MADEPHDQRPTDVIKSYLPEKGPSTSQVLAVVTLFPLGAVLLCLAGLILTGTIIGLAVATPLFVIFSPILVPAALTIALAVTGFLTSGAFGITALSSISWLLNYVRRMRGSLPEQLDHARRRVQETVGQKTREAGQRSQDVIRP.

An N-acetylalanine modification is found at Ala-2. Helical transmembrane passes span 28-48 (VLAV…AGLI), 53-73 (IIGL…LVPA), and 75-95 (LTIA…ITAL). Residues 61-72 (PLFVIFSPILVP) carry the Proline-knot motif. The interval 124-144 (QETVGQKTREAGQRSQDVIRP) is disordered.

It belongs to the oleosin family. In terms of tissue distribution, expressed in seeds (at protein level).

The protein localises to the lipid droplet. Its subcellular location is the membrane. In terms of biological role, may have a structural role to stabilize the lipid body during desiccation of the seed by preventing coalescence of the oil. Probably interacts with both lipid and phospholipid moieties of lipid bodies. May also provide recognition signals for specific lipase anchorage in lipolysis during seedling growth. This is Oleosin H2 from Sesamum indicum (Oriental sesame).